A 207-amino-acid chain; its full sequence is Uracil phosphoribosyltransferase (207 aa).

Residues arginine 77, arginine 102, and 129–137 (DPMLATGGS) contribute to the 5-phospho-alpha-D-ribose 1-diphosphate site. Uracil-binding positions include isoleucine 192 and 197–199 (GDA). 5-phospho-alpha-D-ribose 1-diphosphate is bound at residue aspartate 198.

It belongs to the UPRTase family. The cofactor is Mg(2+).

The catalysed reaction is UMP + diphosphate = 5-phospho-alpha-D-ribose 1-diphosphate + uracil. It participates in pyrimidine metabolism; UMP biosynthesis via salvage pathway; UMP from uracil: step 1/1. Allosterically activated by GTP. Its function is as follows. Catalyzes the conversion of uracil and 5-phospho-alpha-D-ribose 1-diphosphate (PRPP) to UMP and diphosphate. This is Uracil phosphoribosyltransferase from Mycoplasma mobile (strain ATCC 43663 / 163K / NCTC 11711) (Mesomycoplasma mobile).